The primary structure comprises 240 residues: Flavin-dependent thymidylate synthase (240 aa).

The ThyX domain maps to 13 to 235 (ITVELVKHSA…PETHAAFEKQ (223 aa)). FAD is bound by residues Ser-64, 87 to 89 (RHR), and Glu-95. Residues 84 to 87 (EFMR), 95 to 99 (EESGR), and Arg-167 each bind dUMP. The ThyX motif signature appears at 87-97 (RHRIASYNEES). FAD contacts are provided by residues 183-185 (NAR) and Asn-189. Arg-194 lines the dUMP pocket. Catalysis depends on Arg-194, which acts as the Involved in ionization of N3 of dUMP, leading to its activation.

This sequence belongs to the thymidylate synthase ThyX family. In terms of assembly, homotetramer. It depends on FAD as a cofactor.

It carries out the reaction dUMP + (6R)-5,10-methylene-5,6,7,8-tetrahydrofolate + NADPH + H(+) = dTMP + (6S)-5,6,7,8-tetrahydrofolate + NADP(+). The protein operates within pyrimidine metabolism; dTTP biosynthesis. Functionally, catalyzes the reductive methylation of 2'-deoxyuridine-5'-monophosphate (dUMP) to 2'-deoxythymidine-5'-monophosphate (dTMP) while utilizing 5,10-methylenetetrahydrofolate (mTHF) as the methyl donor, and NADPH and FADH(2) as the reductant. This Tropheryma whipplei (strain TW08/27) (Whipple's bacillus) protein is Flavin-dependent thymidylate synthase.